The primary structure comprises 146 residues: Ribonuclease H (146 aa).

Residues Met-1–Lys-143 form the RNase H type-1 domain. Mg(2+)-binding residues include Asp-10, Glu-48, Asp-70, and Asp-135.

Belongs to the RNase H family. In terms of assembly, monomer. Mg(2+) serves as cofactor.

It is found in the cytoplasm. It carries out the reaction Endonucleolytic cleavage to 5'-phosphomonoester.. Its function is as follows. Endonuclease that specifically degrades the RNA of RNA-DNA hybrids. In Chlorobium phaeobacteroides (strain DSM 266 / SMG 266 / 2430), this protein is Ribonuclease H.